The primary structure comprises 137 residues: Small ribosomal subunit protein uS11 (137 aa).

The segment at 1 to 30 (MAQAKKGGAPKKGQKTRRREKKNVPHGAAH) is disordered. Residues 8 to 21 (GAPKKGQKTRRREK) show a composition bias toward basic residues.

It belongs to the universal ribosomal protein uS11 family. As to quaternary structure, part of the 30S ribosomal subunit. Interacts with proteins S7 and S18. Binds to IF-3.

In terms of biological role, located on the platform of the 30S subunit, it bridges several disparate RNA helices of the 16S rRNA. Forms part of the Shine-Dalgarno cleft in the 70S ribosome. This is Small ribosomal subunit protein uS11 from Mycolicibacterium vanbaalenii (strain DSM 7251 / JCM 13017 / BCRC 16820 / KCTC 9966 / NRRL B-24157 / PYR-1) (Mycobacterium vanbaalenii).